A 122-amino-acid polypeptide reads, in one-letter code: Small ribosomal subunit protein uS13 (122 aa).

Positions 93–122 are disordered; that stretch reads RRSLPVRGQRTHTNARTRKGPAKPIAGKKK.

Belongs to the universal ribosomal protein uS13 family. Part of the 30S ribosomal subunit. Forms a loose heterodimer with protein S19. Forms two bridges to the 50S subunit in the 70S ribosome.

Its function is as follows. Located at the top of the head of the 30S subunit, it contacts several helices of the 16S rRNA. In the 70S ribosome it contacts the 23S rRNA (bridge B1a) and protein L5 of the 50S subunit (bridge B1b), connecting the 2 subunits; these bridges are implicated in subunit movement. Contacts the tRNAs in the A and P-sites. The protein is Small ribosomal subunit protein uS13 of Chelativorans sp. (strain BNC1).